A 102-amino-acid polypeptide reads, in one-letter code: Keratin-associated protein 25-1 (102 aa).

Belongs to the PMG family. Interacts with hair keratins.

In terms of biological role, in the hair cortex, hair keratin intermediate filaments are embedded in an interfilamentous matrix, consisting of hair keratin-associated proteins (KRTAP), which are essential for the formation of a rigid and resistant hair shaft through their extensive disulfide bond cross-linking with abundant cysteine residues of hair keratins. The matrix proteins include the high-sulfur and high-glycine-tyrosine keratins. This Homo sapiens (Human) protein is Keratin-associated protein 25-1 (KRTAP25-1).